We begin with the raw amino-acid sequence, 71 residues long: Beta-defensin 124 (71 aa).

An N-terminal signal peptide occupies residues 1-22; sequence MTQLLLFLVALLVLGHVPSGRS. Disulfide bonds link cysteine 27–cysteine 54, cysteine 34–cysteine 48, and cysteine 38–cysteine 55.

The protein belongs to the beta-defensin family.

The protein localises to the secreted. In terms of biological role, has antibacterial activity. This Pan troglodytes (Chimpanzee) protein is Beta-defensin 124 (DEFB124).